The chain runs to 156 residues: MANSHKTDDLDHFDLKILEALSEDGRMSVLQLSKRVGLSKTPCQTRLKRLVDEGYILGFRAVLNPQKLGVDHIAFAEVKLSDTREKALEEFNTAVRKIKEVEECHMIAGAFDYLLKVRTSDIRKYRRVLGEKISSLPSVSNTSTFVVMQSVKETGI.

The 62-residue stretch at 10 to 71 (LDHFDLKILE…VLNPQKLGVD (62 aa)) folds into the HTH asnC-type domain. A DNA-binding region (H-T-H motif) is located at residues 29–48 (VLQLSKRVGLSKTPCQTRLK).

In terms of biological role, transcriptional activator of the putA gene in response to proline. This Rhizobium radiobacter (Agrobacterium tumefaciens) protein is Proline dehydrogenase transcriptional activator (putR).